The following is a 361-amino-acid chain: NudC domain-containing protein 3 (361 aa).

The span at 87–97 (KIRRKEEEEAK) shows a compositional bias: basic and acidic residues. Disordered regions lie at residues 87–106 (KIRR…AAEK) and 124–158 (LDGH…VAGA). Residue Ser146 is modified to Phosphoserine. The span at 148–158 (EAEAPGAVAGA) shows a compositional bias: low complexity. A CS domain is found at 185 to 277 (AVRENYTWSQ…VGEYWWNAIL (93 aa)). A phosphoserine mark is found at Ser340 and Ser355.

The protein is NudC domain-containing protein 3 (NUDCD3) of Homo sapiens (Human).